The following is a 476-amino-acid chain: MPDFFSFINSVLWGSVMIYLLFGAGCWFTFRTGFVQFRYIRQFGKSLKNSIHPQPGGLTSFQSLCTSLAARVGSGNLAGVALAITAGGPGAVFWMWVAAFIGMATSFAECSLAQLYKERDVNGQFRGGPAWYMARGLGMRWMGVLFAVFLLIAYGIIFSGVQANAVARALSFSFDFPPLVTGIILAVFTLLAITRGLHGVARLMQGFVPLMAIIWVLTSLVICVMNIGQLPHVIWSIFESAFGWQEAAGGAAGYTLSQAITNGFQRSMFSNEAGMGSTPNAAAAAASWPPHPAAQGIVQMIGIFIDTLVICTASAMLILLAGNGTTYMPLEGIQLIQKAMRVLMGSWGAEFVTLVVILFAFSSIVANYIYAENNLFFLRLNNPKAIWCLRICTFATVIGGTLLSLPLMWQLADIIMACMAITNLTAILLLSPVVHTIASDYLRQRKLGVRPVFDPLRYPDIGRQLSPDAWDDVSQE.

Helical transmembrane passes span 4–24, 81–101, 141–161, 174–194, 207–227, 233–253, 300–320, 351–371, 391–411, and 414–434; these read FFSFINSVLWGSVMIYLLFGA, ALAITAGGPGAVFWMWVAAFI, WMGVLFAVFLLIAYGIIFSGV, FDFPPLVTGIILAVFTLLAIT, FVPLMAIIWVLTSLVICVMNI, VIWSIFESAFGWQEAAGGAAG, MIGIFIDTLVICTASAMLILL, FVTLVVILFAFSSIVANYIYA, ICTFATVIGGTLLSLPLMWQL, and IIMACMAITNLTAILLLSPVV.

The protein belongs to the alanine or glycine:cation symporter (AGCS) (TC 2.A.25) family.

It localises to the cell inner membrane. This is an uncharacterized protein from Escherichia coli (strain K12).